Reading from the N-terminus, the 461-residue chain is Ribulose bisphosphate carboxylase (461 aa).

Asn-112 lines the substrate pocket. Lys-167 functions as the Proton acceptor in the catalytic mechanism. Lys-169 is a substrate binding site. Residues Lys-192, Asp-194, and Glu-195 each coordinate Mg(2+). An N6-carboxylysine modification is found at Lys-192. Catalysis depends on His-288, which acts as the Proton acceptor. 3 residues coordinate substrate: Arg-289, His-322, and Ser-369.

This sequence belongs to the RuBisCO large chain family. Type II subfamily. As to quaternary structure, homodimer. Mg(2+) serves as cofactor.

The enzyme catalyses 2 (2R)-3-phosphoglycerate + 2 H(+) = D-ribulose 1,5-bisphosphate + CO2 + H2O. The catalysed reaction is D-ribulose 1,5-bisphosphate + O2 = 2-phosphoglycolate + (2R)-3-phosphoglycerate + 2 H(+). Functionally, ruBisCO catalyzes two reactions: the carboxylation of D-ribulose 1,5-bisphosphate, the primary event in carbon dioxide fixation, as well as the oxidative fragmentation of the pentose substrate. Both reactions occur simultaneously and in competition at the same active site. The chain is Ribulose bisphosphate carboxylase from Rhodopseudomonas palustris (strain ATCC BAA-98 / CGA009).